A 367-amino-acid chain; its full sequence is D-alanine--D-alanine ligase (367 aa).

Residues 148–357 (KMAFEQAGLP…FPELVDKLVQ (210 aa)) form the ATP-grasp domain. Residue 184–239 (EASLGYPCFVKPANLGSSVGISKVRSRQELEDALDNAANYDRRIIVEAGVVAREVE) coordinates ATP. Mg(2+) contacts are provided by D310, E324, and N326.

Belongs to the D-alanine--D-alanine ligase family. It depends on Mg(2+) as a cofactor. Mn(2+) serves as cofactor.

It is found in the cytoplasm. The enzyme catalyses 2 D-alanine + ATP = D-alanyl-D-alanine + ADP + phosphate + H(+). It participates in cell wall biogenesis; peptidoglycan biosynthesis. Cell wall formation. This chain is D-alanine--D-alanine ligase, found in Trichormus variabilis (strain ATCC 29413 / PCC 7937) (Anabaena variabilis).